Here is a 252-residue protein sequence, read N- to C-terminus: Glucosamine-6-phosphate deaminase (252 aa).

The active-site Proton acceptor; for enolization step is the Asp-67. Asn-137 (for ring-opening step) is an active-site residue. The active-site Proton acceptor; for ring-opening step is the His-139. Glu-144 serves as the catalytic For ring-opening step.

It belongs to the glucosamine/galactosamine-6-phosphate isomerase family. NagB subfamily.

It carries out the reaction alpha-D-glucosamine 6-phosphate + H2O = beta-D-fructose 6-phosphate + NH4(+). Its pathway is amino-sugar metabolism; N-acetylneuraminate degradation; D-fructose 6-phosphate from N-acetylneuraminate: step 5/5. Catalyzes the reversible isomerization-deamination of glucosamine 6-phosphate (GlcN6P) to form fructose 6-phosphate (Fru6P) and ammonium ion. The sequence is that of Glucosamine-6-phosphate deaminase from Staphylococcus aureus (strain bovine RF122 / ET3-1).